The sequence spans 998 residues: Bifunctional glutamine synthetase adenylyltransferase/adenylyl-removing enzyme (998 aa).

The adenylyl removase stretch occupies residues 1 to 487 (MVVTKPATQR…LHAKLFYQPL (487 aa)). Residues 492–998 (GPAGLEIRHG…KAVVRKVFGS (507 aa)) form an adenylyl transferase region.

This sequence belongs to the GlnE family. Mg(2+) is required as a cofactor.

The enzyme catalyses [glutamine synthetase]-O(4)-(5'-adenylyl)-L-tyrosine + phosphate = [glutamine synthetase]-L-tyrosine + ADP. The catalysed reaction is [glutamine synthetase]-L-tyrosine + ATP = [glutamine synthetase]-O(4)-(5'-adenylyl)-L-tyrosine + diphosphate. Involved in the regulation of glutamine synthetase GlnA, a key enzyme in the process to assimilate ammonia. When cellular nitrogen levels are high, the C-terminal adenylyl transferase (AT) inactivates GlnA by covalent transfer of an adenylyl group from ATP to specific tyrosine residue of GlnA, thus reducing its activity. Conversely, when nitrogen levels are low, the N-terminal adenylyl removase (AR) activates GlnA by removing the adenylyl group by phosphorolysis, increasing its activity. The regulatory region of GlnE binds the signal transduction protein PII (GlnB) which indicates the nitrogen status of the cell. The sequence is that of Bifunctional glutamine synthetase adenylyltransferase/adenylyl-removing enzyme from Mycobacterium avium (strain 104).